A 122-amino-acid chain; its full sequence is Large ribosomal subunit protein bL19 (122 aa).

This sequence belongs to the bacterial ribosomal protein bL19 family.

This protein is located at the 30S-50S ribosomal subunit interface and may play a role in the structure and function of the aminoacyl-tRNA binding site. The protein is Large ribosomal subunit protein bL19 (rplS) of Synechocystis sp. (strain ATCC 27184 / PCC 6803 / Kazusa).